Here is a 203-residue protein sequence, read N- to C-terminus: MIVKICGLKKSVDVKAAVENGADMIGFVFAKSKRQVTIEQAHQLAKNIPPNIKKVGVFVNPTEDELTAAIKGVPLDIVQLHGQEPTEQADRTDAEVIKAFPVKEGKLPNNINDYSNAYILLDAPAEEYEGGSGKTFDWDKVNSDLLIKNKLIIAGGLNVENVKEAINRFEPYAVDISSGVETNGEKDPEKIKIFIKTAKGVGK.

This sequence belongs to the TrpF family.

It catalyses the reaction N-(5-phospho-beta-D-ribosyl)anthranilate = 1-(2-carboxyphenylamino)-1-deoxy-D-ribulose 5-phosphate. It functions in the pathway amino-acid biosynthesis; L-tryptophan biosynthesis; L-tryptophan from chorismate: step 3/5. This Listeria innocua serovar 6a (strain ATCC BAA-680 / CLIP 11262) protein is N-(5'-phosphoribosyl)anthranilate isomerase.